Reading from the N-terminus, the 150-residue chain is Submaxillary gland androgen-regulated protein 2, isoform alpha (150 aa).

The signal sequence occupies residues 1–22; the sequence is MKALYMVFVLWVLIGCFLSGEC.

The protein localises to the secreted. In terms of biological role, may play a role in protection or detoxification. In Mus musculus (Mouse), this protein is Submaxillary gland androgen-regulated protein 2, isoform alpha (Smr2).